The primary structure comprises 347 residues: Uroporphyrinogen decarboxylase (347 aa).

Residues 24 to 28, Asp-74, Tyr-145, Ser-200, and His-315 contribute to the substrate site; that span reads RQAGR.

It belongs to the uroporphyrinogen decarboxylase family. As to quaternary structure, homodimer.

Its subcellular location is the cytoplasm. The catalysed reaction is uroporphyrinogen III + 4 H(+) = coproporphyrinogen III + 4 CO2. It participates in porphyrin-containing compound metabolism; protoporphyrin-IX biosynthesis; coproporphyrinogen-III from 5-aminolevulinate: step 4/4. In terms of biological role, catalyzes the decarboxylation of four acetate groups of uroporphyrinogen-III to yield coproporphyrinogen-III. This Hydrogenobaculum sp. (strain Y04AAS1) protein is Uroporphyrinogen decarboxylase.